Reading from the N-terminus, the 957-residue chain is UvrABC system protein A (957 aa).

ATP is bound at residue 33–40 (GLSGSGKS). Residues 252-279 (CPQCGFSIPELEPRMFSFNSPFGACPTC) form a C4-type zinc finger. ABC transporter domains are found at residues 309 to 587 (WEPI…AKSL) and 607 to 935 (PNGR…KYLR). Residue 639 to 646 (GVSGSGKS) coordinates ATP. The C4-type zinc finger occupies 738 to 764 (CEACRGDGIIKIEMHFLPDVYVPCEVC).

It belongs to the ABC transporter superfamily. UvrA family. As to quaternary structure, forms a heterotetramer with UvrB during the search for lesions.

The protein localises to the cytoplasm. Functionally, the UvrABC repair system catalyzes the recognition and processing of DNA lesions. UvrA is an ATPase and a DNA-binding protein. A damage recognition complex composed of 2 UvrA and 2 UvrB subunits scans DNA for abnormalities. When the presence of a lesion has been verified by UvrB, the UvrA molecules dissociate. This Halalkalibacterium halodurans (strain ATCC BAA-125 / DSM 18197 / FERM 7344 / JCM 9153 / C-125) (Bacillus halodurans) protein is UvrABC system protein A.